Consider the following 147-residue polypeptide: Large ribosomal subunit protein uL13 (147 aa).

The protein belongs to the universal ribosomal protein uL13 family. As to quaternary structure, part of the 50S ribosomal subunit.

This protein is one of the early assembly proteins of the 50S ribosomal subunit, although it is not seen to bind rRNA by itself. It is important during the early stages of 50S assembly. This Beutenbergia cavernae (strain ATCC BAA-8 / DSM 12333 / CCUG 43141 / JCM 11478 / NBRC 16432 / NCIMB 13614 / HKI 0122) protein is Large ribosomal subunit protein uL13.